Here is a 683-residue protein sequence, read N- to C-terminus: DNA-directed RNA polymerase subunit beta' (683 aa).

The Zn(2+) site is built by cysteine 69, cysteine 71, cysteine 87, and cysteine 90. 3 residues coordinate Mg(2+): aspartate 489, aspartate 491, and aspartate 493.

Belongs to the RNA polymerase beta' chain family. RpoC1 subfamily. In terms of assembly, in plastids the minimal PEP RNA polymerase catalytic core is composed of four subunits: alpha, beta, beta', and beta''. When a (nuclear-encoded) sigma factor is associated with the core the holoenzyme is formed, which can initiate transcription. Mg(2+) is required as a cofactor. Requires Zn(2+) as cofactor.

The protein localises to the plastid. The protein resides in the chloroplast. The enzyme catalyses RNA(n) + a ribonucleoside 5'-triphosphate = RNA(n+1) + diphosphate. In terms of biological role, DNA-dependent RNA polymerase catalyzes the transcription of DNA into RNA using the four ribonucleoside triphosphates as substrates. The polypeptide is DNA-directed RNA polymerase subunit beta' (Saccharum hybrid (Sugarcane)).